A 237-amino-acid chain; its full sequence is Platelet-aggregating proteinase PA-BJ (237 aa).

A propeptide spanning residues 1–5 (NSLVI) is cleaved from the precursor. The Peptidase S1 domain maps to 6 to 229 (VVGGRPCKIN…YLPWIESIIA (224 aa)). Intrachain disulfides connect Cys12/Cys144, Cys31/Cys47, Cys79/Cys236, Cys123/Cys191, Cys155/Cys170, and Cys181/Cys205. A glycan (N-linked (GlcNAc...) asparagine) is linked at Asn25. The O-linked (GalNAc...) serine glycan is linked to Ser28. Active-site charge relay system residues include His46 and Asp91. The active-site Charge relay system is the Ser185.

It belongs to the peptidase S1 family. Snake venom subfamily. Monomer. As to expression, expressed by the venom gland.

It localises to the secreted. Inhibited by PMSF. The amidolytic activity is also inhibited by benzamidine derivatives. Snake venom serine protease that induces platelet aggregation through activation of protease-activated platelet receptors (PAR1/F2R and PAR4/F2RL3). On F2R, the cleavage occurs at Arg41-Ser42 (like thrombin cleavage), and Arg46-Asn47. In normal condition of hemostasis, the cleavage of the Arg41-Ser42 bond liberates a new N-terminus that functions as an agonist. However after envenomation, the cleavage of Arg46-Asn47 bond degrades this potential agonist. This may explain why the snake protease is less potent than thrombin in causing platelet aggregation and release reaction. On F2RL3, a thrombin-like activity has also been proven by calcium release from lung fibroblasts transfected with this receptor. Possesses amidolytic activities. This Bothrops jararaca (Jararaca) protein is Platelet-aggregating proteinase PA-BJ.